The sequence spans 217 residues: Large ribosomal subunit protein uL4c (217 aa).

Positions 51 to 85 (HRNRNAHTQTRGEVSGGGRKPWKQKGTGRARAGSN) are disordered.

Belongs to the universal ribosomal protein uL4 family. In terms of assembly, part of the 50S ribosomal subunit.

The protein resides in the plastid. It localises to the chloroplast. Functionally, probably binds the 23S rRNA. The polypeptide is Large ribosomal subunit protein uL4c (rpl4) (Gracilaria tenuistipitata var. liui (Red alga)).